The sequence spans 536 residues: Thiamine transport system permease protein ThiP (536 aa).

Transmembrane regions (helical) follow at residues 12 to 32 (WLIPGVSATTLVVAVALAAFL), 58 to 78 (FSFWQAFLSALLSVIPAIFLA), 95 to 115 (LCAMTLILPVLVAVFGILSVY), 134 to 154 (FSPYGLQGILLAHVFFNLPMA), 199 to 219 (VAALIFMLCFASFATVLSLGG), 240 to 260 (PARAAMLALLQMVCCLGLVLL), 293 to 313 (VLIVLALLLLLPPLLAVIVDG), 334 to 354 (SLRIALAAGVLCVVLTMMLLW), 374 to 394 (SGMLILAMPGIVLATGFFLLL), 404 to 424 (ADGIVIFTNALMAIPYALKVL), 463 to 483 (AQALAFACVLSIGDFGVVALF), and 506 to 526 (DGAVTALILLLLCFLLFTVIE). The region spanning 56–261 (VRFSFWQAFL…VCCLGLVLLS (206 aa)) is the ABC transmembrane type-1 1 domain. An ABC transmembrane type-1 2 domain is found at 331–525 (LWTSLRIALA…LLCFLLFTVI (195 aa)).

It belongs to the binding-protein-dependent transport system permease family. CysTW subfamily. As to quaternary structure, the complex is composed of two ATP-binding proteins (ThiQ), two transmembrane proteins (ThiP) and a solute-binding protein (ThiB).

The protein localises to the cell inner membrane. Transport is inhibited by the sulfhydryl-specific modifier N-ethylmaleimide. Functionally, part of the ABC transporter complex ThiBPQ involved in thiamine import. Probably responsible for the translocation of the substrate across the membrane. In Escherichia coli (strain K12), this protein is Thiamine transport system permease protein ThiP (thiP).